The following is a 327-amino-acid chain: Putative HTH-type transcriptional regulatory protein Mevan_1514 (327 aa).

Positions 128–189 constitute an HTH cro/C1-type domain; it reads LKETREKLNI…IKGINITDYF (62 aa). The segment at residues 139–158 is a DNA-binding region (H-T-H motif); that stretch reads VGELAEFSRVSRKTIYKYEQ.

The sequence is that of Putative HTH-type transcriptional regulatory protein Mevan_1514 from Methanococcus vannielii (strain ATCC 35089 / DSM 1224 / JCM 13029 / OCM 148 / SB).